The sequence spans 268 residues: Bis(5'-nucleosyl)-tetraphosphatase, symmetrical (268 aa).

Belongs to the Ap4A hydrolase family.

It carries out the reaction P(1),P(4)-bis(5'-adenosyl) tetraphosphate + H2O = 2 ADP + 2 H(+). Hydrolyzes diadenosine 5',5'''-P1,P4-tetraphosphate to yield ADP. The polypeptide is Bis(5'-nucleosyl)-tetraphosphatase, symmetrical (Vibrio campbellii (strain ATCC BAA-1116)).